The sequence spans 68 residues: MMSKLGVLLTICLLLFPLTAVPMDGDQPADLPALRTQDFEPERSPWFDPVRRCCSQDCSVCIPCCPPP.

A signal peptide spans methionine 1–alanine 20. The propeptide occupies valine 21–valine 50. 3 disulfide bridges follow: cysteine 53–cysteine 65, cysteine 54–cysteine 61, and cysteine 58–cysteine 64. Proline 63 is subject to 4-hydroxyproline.

Belongs to the conotoxin M superfamily. In terms of tissue distribution, expressed by the venom duct.

The protein resides in the secreted. The protein is Conotoxin VnMMSK-01 of Conus ventricosus (Mediterranean cone).